The following is a 317-amino-acid chain: MQILLANPRGFCAGVDRAISIVERALEIYGAPIYVRHEVVHNRYVVDSLRERGAVFIEEITEVPDGSILIFSAHGVSQAVRAEAKARDLTMLFDATCPLVTKVHMEVARASRRGTEAILIGHAGHPEVEGTMGQYSNPKGGMYLVESPDDVWKLQVKDESNLCFMTQTTLSVDDTSDVIDALRKRFPSIIGPRKDDICYATTNRQEAVRNLAGDADVVLVVGSKNSSNSNRLAELAQRVGKPAYLIDSAADIQEAWLKDAHNIGVTAGASAPDVLVQDVISRLKALGGVNVQEVSGREENIVFEVPKELRVDIKQVD.

Position 12 (Cys-12) interacts with [4Fe-4S] cluster. Positions 41 and 74 each coordinate (2E)-4-hydroxy-3-methylbut-2-enyl diphosphate. His-41 and His-74 together coordinate dimethylallyl diphosphate. Isopentenyl diphosphate contacts are provided by His-41 and His-74. Cys-97 lines the [4Fe-4S] cluster pocket. Residue His-125 coordinates (2E)-4-hydroxy-3-methylbut-2-enyl diphosphate. Residue His-125 participates in dimethylallyl diphosphate binding. Position 125 (His-125) interacts with isopentenyl diphosphate. The active-site Proton donor is Glu-127. Thr-168 provides a ligand contact to (2E)-4-hydroxy-3-methylbut-2-enyl diphosphate. Cys-198 contributes to the [4Fe-4S] cluster binding site. The (2E)-4-hydroxy-3-methylbut-2-enyl diphosphate site is built by Ser-226, Ser-227, Asn-228, and Ser-270. 4 residues coordinate dimethylallyl diphosphate: Ser-226, Ser-227, Asn-228, and Ser-270. Isopentenyl diphosphate contacts are provided by Ser-226, Ser-227, Asn-228, and Ser-270.

The protein belongs to the IspH family. In terms of assembly, homodimer. It depends on [4Fe-4S] cluster as a cofactor.

It catalyses the reaction isopentenyl diphosphate + 2 oxidized [2Fe-2S]-[ferredoxin] + H2O = (2E)-4-hydroxy-3-methylbut-2-enyl diphosphate + 2 reduced [2Fe-2S]-[ferredoxin] + 2 H(+). It carries out the reaction dimethylallyl diphosphate + 2 oxidized [2Fe-2S]-[ferredoxin] + H2O = (2E)-4-hydroxy-3-methylbut-2-enyl diphosphate + 2 reduced [2Fe-2S]-[ferredoxin] + 2 H(+). Its pathway is isoprenoid biosynthesis; dimethylallyl diphosphate biosynthesis; dimethylallyl diphosphate from (2E)-4-hydroxy-3-methylbutenyl diphosphate: step 1/1. It participates in isoprenoid biosynthesis; isopentenyl diphosphate biosynthesis via DXP pathway; isopentenyl diphosphate from 1-deoxy-D-xylulose 5-phosphate: step 6/6. Catalyzes the conversion of 1-hydroxy-2-methyl-2-(E)-butenyl 4-diphosphate (HMBPP) into a mixture of isopentenyl diphosphate (IPP) and dimethylallyl diphosphate (DMAPP). Acts in the terminal step of the DOXP/MEP pathway for isoprenoid precursor biosynthesis. This is 4-hydroxy-3-methylbut-2-enyl diphosphate reductase from Serratia proteamaculans (strain 568).